The primary structure comprises 444 residues: L-seryl-tRNA(Sec) selenium transferase (444 aa).

Lysine 284 carries the post-translational modification N6-(pyridoxal phosphate)lysine.

This sequence belongs to the SelA family. Pyridoxal 5'-phosphate is required as a cofactor.

It localises to the cytoplasm. The catalysed reaction is L-seryl-tRNA(Sec) + selenophosphate + H(+) = L-selenocysteinyl-tRNA(Sec) + phosphate. It participates in aminoacyl-tRNA biosynthesis; selenocysteinyl-tRNA(Sec) biosynthesis; selenocysteinyl-tRNA(Sec) from L-seryl-tRNA(Sec) (bacterial route): step 1/1. Functionally, converts seryl-tRNA(Sec) to selenocysteinyl-tRNA(Sec) required for selenoprotein biosynthesis. This Wolinella succinogenes (strain ATCC 29543 / DSM 1740 / CCUG 13145 / JCM 31913 / LMG 7466 / NCTC 11488 / FDC 602W) (Vibrio succinogenes) protein is L-seryl-tRNA(Sec) selenium transferase.